A 473-amino-acid polypeptide reads, in one-letter code: 3-isopropylmalate dehydratase large subunit (473 aa).

[4Fe-4S] cluster contacts are provided by Cys-348, Cys-413, and Cys-416.

Belongs to the aconitase/IPM isomerase family. LeuC type 1 subfamily. Heterodimer of LeuC and LeuD. Requires [4Fe-4S] cluster as cofactor.

It catalyses the reaction (2R,3S)-3-isopropylmalate = (2S)-2-isopropylmalate. The protein operates within amino-acid biosynthesis; L-leucine biosynthesis; L-leucine from 3-methyl-2-oxobutanoate: step 2/4. Its function is as follows. Catalyzes the isomerization between 2-isopropylmalate and 3-isopropylmalate, via the formation of 2-isopropylmaleate. This chain is 3-isopropylmalate dehydratase large subunit, found in Parvibaculum lavamentivorans (strain DS-1 / DSM 13023 / NCIMB 13966).